Reading from the N-terminus, the 91-residue chain is LYR motif-containing protein 4 (91 aa).

2 residues coordinate pantetheine 4'-phosphate: R6 and K44. K47 carries the N6-succinyllysine modification.

Belongs to the complex I LYR family. In terms of assembly, homodimer. Component of the mitochondrial core iron-sulfur cluster (ISC) complex composed of NFS1, LYRM4, NDUFAB1, ISCU, FXN, and FDX2; this complex is a heterohexamer containing two copies of each monomer. Component of the cyteine desulfurase complex composed of NFS1, LYRM4 and NDUFAB1; this complex contributes to the stability and cysteine desulfurase activity of NFS1. Interacts with FXN; this interaction is nickel-dependent. Interacts with the cytoplasmic form of NFS1; the complex increases the stability of NFS1. Forms a complex with the cytoplasmic form of NFS1; this complex increases the stability and cysteine desulfurase activity of NFS1. Interacts with NFS1.

It localises to the mitochondrion. It is found in the nucleus. It participates in cofactor biosynthesis; iron-sulfur cluster biosynthesis. Stabilizing factor, of the core iron-sulfur cluster (ISC) assembly complex, that regulates, in association with NDUFAB1, the stability and the cysteine desulfurase activity of NFS1 and participates in the [2Fe-2S] clusters assembly on the scaffolding protein ISCU. The core iron-sulfur cluster (ISC) assembly complex is involved in the de novo synthesis of a [2Fe-2S] cluster, the first step of the mitochondrial iron-sulfur protein biogenesis. This process is initiated by the cysteine desulfurase complex (NFS1:LYRM4:NDUFAB1) that produces persulfide which is delivered on the scaffold protein ISCU in a FXN-dependent manner. Then this complex is stabilized by FDX2 which provides reducing equivalents to accomplish the [2Fe-2S] cluster assembly. Finally, the [2Fe-2S] cluster is transferred from ISCU to chaperone proteins, including HSCB, HSPA9 and GLRX5. May also participates in the iron-sulfur protein biogenesis in the cytoplasm through its interaction with the cytoplasmic form of NFS1. This is LYR motif-containing protein 4 from Bos taurus (Bovine).